The chain runs to 249 residues: Ribosomal RNA small subunit methyltransferase G (249 aa).

Residues Gly88, Phe93, 111 to 113, 139 to 140, and Arg158 contribute to the S-adenosyl-L-methionine site; these read DAT and AE.

Belongs to the methyltransferase superfamily. RNA methyltransferase RsmG family.

The protein localises to the cytoplasm. Specifically methylates the N7 position of a guanine in 16S rRNA. The chain is Ribosomal RNA small subunit methyltransferase G from Thermus thermophilus (strain ATCC BAA-163 / DSM 7039 / HB27).